The primary structure comprises 503 residues: MVSIRPDEISSIIRQQIEQYEQSIKVDNVGTVLQVGDGIARVYGLDKVMASELVEFEDGTVGIALNLEEDNVGVVLMGDGLSIEEGSTVRATGKIASIPVGEAAIGRVVDALMRPIDGKGEIHTTQSRLIESPAPGIVQRKSVCEPLQTGITAIDAMIPIGRGQRELIIGDRQTGKTAVAIDTILNQKGQDVICVYVAIGQKASSVAQVVNVLRERGALDYTIVIAANASDPAALQYLAPYTGATVAEYFMYQGKHTLVVYDDLSKQAQAYRQMSLLLRRPPGREAYPGDVFYLHSRLLERAAKLNDALGGGSMTALPVVETQAGDVSAYIPTNVISITDGQIFLSSDLFNAGLRPAINAGISVSRVGSAAQIKAMKQVAGKLKLELAQFDELQAFAQFASDLDKATQNQLARGQRLREILKQPQYSPIPVEYQVATIYAGTNGYLDDIPVEAVAKFVAGLRDYLRTNKPEYGEIIRTTQKLDEKAEALLKEAIAEYKATFTA.

Position 170–177 (170–177 (GDRQTGKT)) interacts with ATP.

F-type ATPases have 2 components, CF(1) - the catalytic core - and CF(0) - the membrane proton channel. CF(1) has five subunits: alpha(3), beta(3), gamma(1), delta(1), epsilon(1). CF(0) has four main subunits: a(1), b(1), b'(1) and c(9-12).

The protein resides in the cellular thylakoid membrane. The enzyme catalyses ATP + H2O + 4 H(+)(in) = ADP + phosphate + 5 H(+)(out). Its activity is regulated as follows. Inhibited by dicyclohexylcarbodiimide. Its function is as follows. Produces ATP from ADP in the presence of a proton gradient across the membrane. The alpha chain is a regulatory subunit. Functionally, the complex from the organism is particularly stable to disruption and remains functional after 6 hrs at 55 degrees Celsius. In Thermosynechococcus vestitus (strain NIES-2133 / IAM M-273 / BP-1), this protein is ATP synthase subunit alpha.